The primary structure comprises 169 residues: Large ribosomal subunit protein uL10 (169 aa).

This sequence belongs to the universal ribosomal protein uL10 family. Part of the ribosomal stalk of the 50S ribosomal subunit. The N-terminus interacts with L11 and the large rRNA to form the base of the stalk. The C-terminus forms an elongated spine to which L12 dimers bind in a sequential fashion forming a multimeric L10(L12)X complex.

Forms part of the ribosomal stalk, playing a central role in the interaction of the ribosome with GTP-bound translation factors. The sequence is that of Large ribosomal subunit protein uL10 from Lactobacillus delbrueckii subsp. bulgaricus (strain ATCC 11842 / DSM 20081 / BCRC 10696 / JCM 1002 / NBRC 13953 / NCIMB 11778 / NCTC 12712 / WDCM 00102 / Lb 14).